A 126-amino-acid chain; its full sequence is Large ribosomal subunit protein bL19 (126 aa).

This sequence belongs to the bacterial ribosomal protein bL19 family.

Its function is as follows. This protein is located at the 30S-50S ribosomal subunit interface and may play a role in the structure and function of the aminoacyl-tRNA binding site. This is Large ribosomal subunit protein bL19 from Nitrobacter winogradskyi (strain ATCC 25391 / DSM 10237 / CIP 104748 / NCIMB 11846 / Nb-255).